The chain runs to 109 residues: Matrix protein 2 (109 aa).

The Virion surface portion of the chain corresponds to 1-4; that stretch reads MLEP. A helical; Signal-anchor for type III membrane protein membrane pass occupies residues 5–27; that stretch reads FQILSICSFILSALHFMAWTIGH. At 28–109 the chain is on the intravirion side; the sequence is LNQIKRGVNL…ETVLEVEELQ (82 aa). Positions 58–83 form a coiled coil; it reads HSYQKEIQAKETMKEVLSDNMEILSD.

In terms of assembly, homotetramer. In terms of processing, phosphorylated by host.

The protein localises to the virion membrane. The protein resides in the host cell membrane. Forms presumably a highly low-pH gated proton-selective channel. Trp-23 may function as a minimalistic gate that opens and closes the pore. When the environmental pH is lower than a threshold, the BM2 channel would be activated and selectively transport protons across the membrane from the extracellular side to the cytoplasmic side. Crucial for the uncoating process. When the virion is internalized into the endosome, the channel acidifies the virion's interior, promoting the dissociation of matrix protein 1 (M1) from the ribonucleoprotein (RNP) thus allowing the transport of the RNP from the virion into the cell's nucleus. Also plays a role in viral protein secretory pathway. Elevates the intravesicular pH of normally acidic compartments, such as trans-Golgi network, preventing newly formed hemagglutinin from premature switching to the fusion-active conformation. Plays a crucial role in virion assembly. Expressed in the late phase of the infection. The sequence is that of Matrix protein 2 (M) from Influenza B virus (strain B/Ann Arbor/1/1966 [cold-adapted]).